A 1360-amino-acid polypeptide reads, in one-letter code: NAD(+) hydrolase sarm1 (1360 aa).

Residues 27 to 52 (RITGGPGSISTTSASAITAPSTMSQT) form a disordered region. The segment covering 34–48 (SISTTSASAITAPST) has biased composition (low complexity). 2 SAM domains span residues 690–754 (WSVE…LKRM) and 760–828 (KDTA…NSLP). The TIR domain occupies 837-981 (KTLDVFVSYR…KLERFLRGEK (145 aa)). NAD(+) is bound by residues 846–847 (RR) and E876. E919 is an active-site residue. Residues 997 to 1010 (VSYQRMHSNDSDYQ) are compositionally biased toward polar residues. Disordered regions lie at residues 997-1026 (VSYQRMHSNDSDYQSGGAGAGSGAGTGGGG), 1046-1085 (GQANHQANRYRQSPSPARQRGSTSQLSGYSRAPSKRSQIL), 1121-1148 (SAAGLGHGSGSGMGSGYRSHSVDGLLDQ), 1192-1217 (NDSVTRRDKHTLSPPGNVQQHRKSRS), and 1249-1343 (IPMT…GNNK). The segment covering 1012-1026 (GGAGAGSGAGTGGGG) has biased composition (gly residues). The span at 1046–1073 (GQANHQANRYRQSPSPARQRGSTSQLSG) shows a compositional bias: polar residues. Residues 1125-1135 (LGHGSGSGMGS) are compositionally biased toward gly residues. Residues 1321–1335 (SLTSNKTSNSSLGSN) show a composition bias toward low complexity.

This sequence belongs to the SARM1 family. In terms of tissue distribution, widely expressed in larval brains and adult brains.

Its subcellular location is the cytoplasm. It is found in the cell projection. The protein resides in the axon. It catalyses the reaction NAD(+) + H2O = ADP-D-ribose + nicotinamide + H(+). It carries out the reaction NAD(+) = cyclic ADP-beta-D-ribose + nicotinamide + H(+). Functionally, NAD(+) hydrolase, which plays a key role in axonal degeneration following injury by regulating NAD(+) metabolism. Acts as a negative regulator of MYD88- and TRIF-dependent toll-like receptor signaling pathway by promoting Wallerian degeneration, an injury-induced form of programmed subcellular death which involves degeneration of an axon distal to the injury site. Wallerian degeneration is triggered by NAD(+) depletion: in response to injury, it is activated and catalyzes cleavage of NAD(+) into ADP-D-ribose (ADPR), cyclic ADPR (cADPR) and nicotinamide; NAD(+) cleavage promoting axon destruction. Involved in the down-regulation of the tracheal immune response to Gram-negative bacteria. This is likely by mediating Tollo signaling in the tracheal epithelium. The polypeptide is NAD(+) hydrolase sarm1 (Drosophila melanogaster (Fruit fly)).